Here is a 761-residue protein sequence, read N- to C-terminus: 3'-5' RNA nuclease TATDN2 (761 aa).

Disordered stretches follow at residues methionine 1–glycine 90, cysteine 135–glutamine 181, lysine 197–valine 294, lysine 318–glutamate 337, arginine 343–threonine 364, and serine 388–histidine 486. Composition is skewed to low complexity over residues alanine 33–proline 52 and serine 66–serine 85. Positions glutamine 247–valine 294 are enriched in basic and acidic residues. Residues serine 388 to serine 402 are compositionally biased toward low complexity. The span at serine 417–serine 431 shows a compositional bias: polar residues. Positions arginine 452–proline 470 are enriched in basic and acidic residues. The a divalent metal cation site is built by histidine 499, histidine 501, glutamate 593, histidine 630, histidine 655, and aspartate 707.

This sequence belongs to the metallo-dependent hydrolases superfamily. TatD-type hydrolase family. Requires Mg(2+) as cofactor.

The protein resides in the nucleus. Mg(2+)-dependent 3'RNA exonuclease and endonuclease that resolves R-loops via specific degradation of R-loop RNA stucture. Shows no activity against D-loop and minimal activity against the RNA strand of an RNA-DNA hybrid duplex oligomer. Has no 3' or 5' exonuclease activity, no uracil glycosylase activity, and no 5' flap endonuclease activity on DNA substrates. May have a role in maintaining genomic stability through its role in R-loop resolution. The sequence is that of 3'-5' RNA nuclease TATDN2 (TATDN2) from Homo sapiens (Human).